The chain runs to 523 residues: NEDD8-activating enzyme E1 regulatory subunit AXL (523 aa).

The protein belongs to the ubiquitin-activating E1 family. ULA1 subfamily. In terms of assembly, heterodimer of ECR1 and AXL1. The complex binds to RUB1/NEDD8 and RCE1.

Its subcellular location is the nucleus. Its pathway is protein modification; protein neddylation. Regulatory subunit of the dimeric ECR1-AXL1 E1 enzyme. E1 activates RUB1/NEDD8 by first adenylating its C-terminal glycine residue with ATP, thereafter linking this residue to the side chain of the catalytic cysteine, yielding a RUB1-ECR1 thioester and free AMP. E1 finally transfers RUB1 to the catalytic cysteine of RCE1. May function redundantly with AXR1 in the RUB conjugating pathway. Seems not to be functionally equivalent to AXR1 in vivo. The protein is NEDD8-activating enzyme E1 regulatory subunit AXL of Arabidopsis thaliana (Mouse-ear cress).